A 250-amino-acid chain; its full sequence is 3-deoxy-manno-octulosonate cytidylyltransferase (250 aa).

This sequence belongs to the KdsB family.

The protein localises to the cytoplasm. The enzyme catalyses 3-deoxy-alpha-D-manno-oct-2-ulosonate + CTP = CMP-3-deoxy-beta-D-manno-octulosonate + diphosphate. Its pathway is nucleotide-sugar biosynthesis; CMP-3-deoxy-D-manno-octulosonate biosynthesis; CMP-3-deoxy-D-manno-octulosonate from 3-deoxy-D-manno-octulosonate and CTP: step 1/1. It participates in bacterial outer membrane biogenesis; lipopolysaccharide biosynthesis. Its function is as follows. Activates KDO (a required 8-carbon sugar) for incorporation into bacterial lipopolysaccharide in Gram-negative bacteria. This Syntrophotalea carbinolica (strain DSM 2380 / NBRC 103641 / GraBd1) (Pelobacter carbinolicus) protein is 3-deoxy-manno-octulosonate cytidylyltransferase.